A 238-amino-acid polypeptide reads, in one-letter code: Phosphoribosylaminoimidazole-succinocarboxamide synthase (238 aa).

The protein belongs to the SAICAR synthetase family.

It catalyses the reaction 5-amino-1-(5-phospho-D-ribosyl)imidazole-4-carboxylate + L-aspartate + ATP = (2S)-2-[5-amino-1-(5-phospho-beta-D-ribosyl)imidazole-4-carboxamido]succinate + ADP + phosphate + 2 H(+). The protein operates within purine metabolism; IMP biosynthesis via de novo pathway; 5-amino-1-(5-phospho-D-ribosyl)imidazole-4-carboxamide from 5-amino-1-(5-phospho-D-ribosyl)imidazole-4-carboxylate: step 1/2. The chain is Phosphoribosylaminoimidazole-succinocarboxamide synthase from Persephonella marina (strain DSM 14350 / EX-H1).